A 167-amino-acid chain; its full sequence is Small ribosomal subunit protein uS5 (167 aa).

The region spanning 12–75 (LQEKLIAVNR…EKARRNMVTI (64 aa)) is the S5 DRBM domain.

It belongs to the universal ribosomal protein uS5 family. In terms of assembly, part of the 30S ribosomal subunit. Contacts proteins S4 and S8.

Its function is as follows. With S4 and S12 plays an important role in translational accuracy. In terms of biological role, located at the back of the 30S subunit body where it stabilizes the conformation of the head with respect to the body. The protein is Small ribosomal subunit protein uS5 of Vibrio vulnificus (strain CMCP6).